We begin with the raw amino-acid sequence, 115 residues long: Immunoglobulin kappa variable 5-2 (115 aa).

An N-terminal signal peptide occupies residues 1 to 20; the sequence is MGSQVHLLSFLLLWISDTRA. The segment at 21–43 is framework-1; sequence ETTLTQSPAFMSATPGDKVNISC. Residues 22–115 form the Ig-like domain; it reads TTLTQSPAFM…YFCLQHDNFP (94 aa). Asparagine 40 carries an N-linked (GlcNAc...) asparagine glycan. Serine 42 carries the post-translational modification Phosphoserine. Residues cysteine 43 and cysteine 108 are joined by a disulfide bond. Residues 44–54 are complementarity-determining-1; it reads KASQDIDDDMN. The framework-2 stretch occupies residues 55–69; sequence WYQQKPGEAAIFIIQ. The tract at residues 70–76 is complementarity-determining-2; the sequence is EATTLVP. Residues 77 to 108 are framework-3; that stretch reads GIPPRFSGSGYGTDFTLTINNIESEDAAYYFC. The interval 109 to 115 is complementarity-determining-3; the sequence is LQHDNFP.

Immunoglobulins are composed of two identical heavy chains and two identical light chains; disulfide-linked.

Its subcellular location is the secreted. It is found in the cell membrane. Its function is as follows. V region of the variable domain of immunoglobulin light chains that participates in the antigen recognition. Immunoglobulins, also known as antibodies, are membrane-bound or secreted glycoproteins produced by B lymphocytes. In the recognition phase of humoral immunity, the membrane-bound immunoglobulins serve as receptors which, upon binding of a specific antigen, trigger the clonal expansion and differentiation of B lymphocytes into immunoglobulins-secreting plasma cells. Secreted immunoglobulins mediate the effector phase of humoral immunity, which results in the elimination of bound antigens. The antigen binding site is formed by the variable domain of one heavy chain, together with that of its associated light chain. Thus, each immunoglobulin has two antigen binding sites with remarkable affinity for a particular antigen. The variable domains are assembled by a process called V-(D)-J rearrangement and can then be subjected to somatic hypermutations which, after exposure to antigen and selection, allow affinity maturation for a particular antigen. In Homo sapiens (Human), this protein is Immunoglobulin kappa variable 5-2.